Reading from the N-terminus, the 156-residue chain is Small ribosomal subunit protein uS7 (156 aa).

It belongs to the universal ribosomal protein uS7 family. Part of the 30S ribosomal subunit. Contacts proteins S9 and S11.

In terms of biological role, one of the primary rRNA binding proteins, it binds directly to 16S rRNA where it nucleates assembly of the head domain of the 30S subunit. Is located at the subunit interface close to the decoding center, probably blocks exit of the E-site tRNA. This chain is Small ribosomal subunit protein uS7, found in Cupriavidus metallidurans (strain ATCC 43123 / DSM 2839 / NBRC 102507 / CH34) (Ralstonia metallidurans).